We begin with the raw amino-acid sequence, 212 residues long: Ribosomal RNA small subunit methyltransferase G (212 aa).

S-adenosyl-L-methionine contacts are provided by residues glycine 80, leucine 85, 131–132, and arginine 146; that span reads AE.

This sequence belongs to the methyltransferase superfamily. RNA methyltransferase RsmG family.

The protein localises to the cytoplasm. The catalysed reaction is guanosine(527) in 16S rRNA + S-adenosyl-L-methionine = N(7)-methylguanosine(527) in 16S rRNA + S-adenosyl-L-homocysteine. Its function is as follows. Specifically methylates the N7 position of guanine in position 527 of 16S rRNA. The protein is Ribosomal RNA small subunit methyltransferase G of Xanthomonas campestris pv. campestris (strain 8004).